The chain runs to 4830 residues: Siderophore peptide synthetase fer3 (4830 aa).

The adenylation 1 stretch occupies residues 197–623; that stretch reads LDQAEKFPDR…LGRMNAEQVK (427 aa). One can recognise a Carrier 1 domain in the interval 751–833; it reads ANEDPVTQAL…DLIPLLSDTT (83 aa). The residue at position 788 (Ser788) is an O-(pantetheine 4'-phosphoryl)serine. The interval 879–1317 is condensation 1; the sequence is QKIFPTTATQ…HSLMREPETT (439 aa). The adenylation 2 stretch occupies residues 1358 to 1781; that stretch reads FENKAATEPE…IGRRDDLVKL (424 aa). The 77-residue stretch at 1929–2005 folds into the Carrier 2 domain; sequence GEDGDLQCQV…MLIRGLATKT (77 aa). At Ser1966 the chain carries O-(pantetheine 4'-phosphoryl)serine. The segment at 2048-2503 is condensation 2; sequence IPCSTLQEGM…LLDQVVSLLT (456 aa). The adenylation 3 stretch occupies residues 2573–2977; that stretch reads AGTPETACIN…LGRRDEQEKI (405 aa). Residues 3122 to 3198 enclose the Carrier 3 domain; that stretch reads RPLSSLEREI…DIAAELSDSK (77 aa). The residue at position 3159 (Ser3159) is an O-(pantetheine 4'-phosphoryl)serine. The segment at 3232–3621 is condensation 3; it reads KVLPCLPSQE…RDRDELRISA (390 aa). Residues 3685–3760 form the Carrier 4 domain; the sequence is TAAEEQIRDL…GLSKLLDQRQ (76 aa). At Ser3720 the chain carries O-(pantetheine 4'-phosphoryl)serine. Residues 3779-4199 are condensation 4; the sequence is RYKATPLQAG…GVQIKAGASD (421 aa). The region spanning 4264-4340 is the Carrier 5 domain; the sequence is SLSTAEQDIV…RLTVATETRS (77 aa). Ser4301 carries the post-translational modification O-(pantetheine 4'-phosphoryl)serine. Residues 4381–4708 are condensation 5; sequence VLPLLTGQQQ…DLVSRAEHQQ (328 aa).

This sequence belongs to the NRP synthetase family.

Its pathway is siderophore biosynthesis. Functionally, nonribosomal peptide synthetase; part of the gene cluster that mediates the biosynthesis of siderophore ferrichrome A which is contributing to organismal virulence. The first step of ferrichrome A biosynthesis is performed by the HMG-CoA synthase hcs1 which catalyzes the generation of HMG-CoA and CoA using acetoacetyl-CoA and acetyl-CoA as substrates. The enoyl-CoA isomerase/hydratase fer4 then catalyzes the conversion of hcs1-produced HMG-CoA to methylglutaconyl-CoA. The acyltransferase fer5 then fuses the fer4-generated methylglutaconyl-CoA with sid1-generated hydroxyornithine to yield methylglutaconyl hydroxyornithine. Methylglutaconyl hydroxyornithine is then available for use by the NRPS fer3 to generate ferrichrome A. The chain is Siderophore peptide synthetase fer3 from Mycosarcoma maydis (Corn smut fungus).